The following is a 366-amino-acid chain: UDP-N-acetylglucosamine--N-acetylmuramyl-(pentapeptide) pyrophosphoryl-undecaprenol N-acetylglucosamine transferase (366 aa).

Residues 10–12 (TGG), asparagine 124, arginine 166, serine 196, and glutamine 297 contribute to the UDP-N-acetyl-alpha-D-glucosamine site.

The protein belongs to the glycosyltransferase 28 family. MurG subfamily.

It localises to the cell membrane. The enzyme catalyses di-trans,octa-cis-undecaprenyl diphospho-N-acetyl-alpha-D-muramoyl-L-alanyl-D-glutamyl-meso-2,6-diaminopimeloyl-D-alanyl-D-alanine + UDP-N-acetyl-alpha-D-glucosamine = di-trans,octa-cis-undecaprenyl diphospho-[N-acetyl-alpha-D-glucosaminyl-(1-&gt;4)]-N-acetyl-alpha-D-muramoyl-L-alanyl-D-glutamyl-meso-2,6-diaminopimeloyl-D-alanyl-D-alanine + UDP + H(+). The protein operates within cell wall biogenesis; peptidoglycan biosynthesis. In terms of biological role, cell wall formation. Catalyzes the transfer of a GlcNAc subunit on undecaprenyl-pyrophosphoryl-MurNAc-pentapeptide (lipid intermediate I) to form undecaprenyl-pyrophosphoryl-MurNAc-(pentapeptide)GlcNAc (lipid intermediate II). This chain is UDP-N-acetylglucosamine--N-acetylmuramyl-(pentapeptide) pyrophosphoryl-undecaprenol N-acetylglucosamine transferase, found in Alkaliphilus metalliredigens (strain QYMF).